A 620-amino-acid polypeptide reads, in one-letter code: Proline--tRNA ligase (620 aa).

Belongs to the class-II aminoacyl-tRNA synthetase family. ProS type 1 subfamily. As to quaternary structure, homodimer.

It localises to the cytoplasm. The enzyme catalyses tRNA(Pro) + L-proline + ATP = L-prolyl-tRNA(Pro) + AMP + diphosphate. Functionally, catalyzes the attachment of proline to tRNA(Pro) in a two-step reaction: proline is first activated by ATP to form Pro-AMP and then transferred to the acceptor end of tRNA(Pro). As ProRS can inadvertently accommodate and process non-cognate amino acids such as alanine and cysteine, to avoid such errors it has two additional distinct editing activities against alanine. One activity is designated as 'pretransfer' editing and involves the tRNA(Pro)-independent hydrolysis of activated Ala-AMP. The other activity is designated 'posttransfer' editing and involves deacylation of mischarged Ala-tRNA(Pro). The misacylated Cys-tRNA(Pro) is not edited by ProRS. The sequence is that of Proline--tRNA ligase from Streptococcus suis (strain 98HAH33).